We begin with the raw amino-acid sequence, 545 residues long: Glucans biosynthesis protein G (545 aa).

The signal sequence occupies residues 1–34 (MVSLLRCQSFKPSSSLICSLALSAAFALSSSAFA). Residues 38–60 (KPAENKPATPVVSPPKATAQPAN) form a disordered region.

The protein belongs to the OpgD/OpgG family.

The protein resides in the periplasm. Its pathway is glycan metabolism; osmoregulated periplasmic glucan (OPG) biosynthesis. In terms of biological role, involved in the biosynthesis of osmoregulated periplasmic glucans (OPGs). This chain is Glucans biosynthesis protein G, found in Shewanella sp. (strain ANA-3).